Reading from the N-terminus, the 822-residue chain is IQ and AAA domain-containing protein 1-like (822 aa).

The IQ domain maps to 206–235; sequence QDQGAIVIQKVWKGYLQRKRIEQDRRMEME. Basic and acidic residues predominate over residues 338 to 363; it reads RQELEAQAQENKKKEQEKNKDKVKEK. 2 disordered regions span residues 338-378 and 457-484; these read RQEL…KAKK and REET…KDLT. The span at 464–479 shows a compositional bias: basic residues; that stretch reads KSPKKKGGKKSGKKKK. Residue 569 to 576 participates in ATP binding; the sequence is GPSGMGKK.

Belongs to the AAA ATPase family.

The chain is IQ and AAA domain-containing protein 1-like (Iqca1l) from Rattus norvegicus (Rat).